The following is a 263-amino-acid chain: SPRY domain-containing SOCS box protein 2 (263 aa).

Over residues 1–16 (MGQTALAGGSSSTPTP) the composition is skewed to polar residues. Positions 1 to 48 (MGQTALAGGSSSTPTPQALYPDLSCPEGLEELLSAPPPDLGAQRRHGW) are disordered. One can recognise a B30.2/SPRY domain in the interval 26–221 (PEGLEELLSA…VRIRYLGERR (196 aa)). The SOCS box domain occupies 222–263 (AEPHSLLHLSRLCVRHNLGDTRLGQVSALPLPPAMKRYLLYQ).

This sequence belongs to the SPSB family. As to quaternary structure, component of the probable ECS(SPSB2) E3 ubiquitin-protein ligase complex which contains CUL5, RNF7/RBX2, Elongin BC complex and SPSB2. Interacts with CUL5, RNF7, ELOB and ELOC. Interacts with MET. Interacts (via B30.2/SPRY domain) with PAWR; this interaction occurs in association with the Elongin BC complex. Interacts with NOS2. In terms of assembly, (Microbial infection) Interacts (via C-terminus) with HCV envelope glycoprotein E1. Interacts (via C-terminus) with HCV non-structural protein 5A; this interaction targets NS5A for ubiquitination and degradation.

The protein resides in the cytoplasm. The protein localises to the cytosol. The protein operates within protein modification; protein ubiquitination. Functionally, substrate recognition component of a SCF-like ECS (Elongin BC-CUL2/5-SOCS-box protein) E3 ubiquitin-protein ligase complex which mediates the ubiquitination and subsequent proteasomal degradation of target proteins. Negatively regulates nitric oxide (NO) production and limits cellular toxicity in activated macrophages by mediating the ubiquitination and proteasomal degradation of NOS2. Acts as a bridge which links NOS2 with the ECS E3 ubiquitin ligase complex components ELOC and CUL5. The sequence is that of SPRY domain-containing SOCS box protein 2 (SPSB2) from Homo sapiens (Human).